A 154-amino-acid polypeptide reads, in one-letter code: Aspartate carbamoyltransferase regulatory chain (154 aa).

Zn(2+)-binding residues include Cys-109, Cys-114, Cys-138, and Cys-141.

The protein belongs to the PyrI family. Contains catalytic and regulatory chains. It depends on Zn(2+) as a cofactor.

Its function is as follows. Involved in allosteric regulation of aspartate carbamoyltransferase. The chain is Aspartate carbamoyltransferase regulatory chain from Aliivibrio salmonicida (strain LFI1238) (Vibrio salmonicida (strain LFI1238)).